Here is a 209-residue protein sequence, read N- to C-terminus: Kinetochore protein Spc25 (209 aa).

The stretch at Thr-74–Asp-107 forms a coiled coil.

This sequence belongs to the SPC25 family. Component of the Ndc80 complex, which is composed of Ndc80, Nuf2 and Spc25.

It is found in the nucleus. It localises to the chromosome. The protein localises to the centromere. Its subcellular location is the kinetochore. Acts as a component of the essential kinetochore-associated Ndc80 complex, which is required for chromosome segregation and spindle checkpoint activity during meiosis and mitosis. Required for kinetochore integrity and the organization of stable microtubule binding sites in the outer plate of the kinetochore. Participates in SAC signaling that responds specifically to disruptions in spindle microtubule dynamics. The NDC80 complex synergistically enhances the affinity of the SKA1 complex for microtubules and may allow the NDC80 complex to track depolymerizing microtubules. The chain is Kinetochore protein Spc25 from Drosophila grimshawi (Hawaiian fruit fly).